A 395-amino-acid polypeptide reads, in one-letter code: Phosphoglycerate kinase (395 aa).

Substrate-binding positions include 21–23, arginine 36, 59–62, arginine 113, and arginine 146; these read DLN and HLGR. ATP contacts are provided by residues lysine 197, glutamate 324, and 350–353; that span reads GGDT.

It belongs to the phosphoglycerate kinase family. Monomer.

The protein resides in the cytoplasm. The catalysed reaction is (2R)-3-phosphoglycerate + ATP = (2R)-3-phospho-glyceroyl phosphate + ADP. It participates in carbohydrate degradation; glycolysis; pyruvate from D-glyceraldehyde 3-phosphate: step 2/5. The polypeptide is Phosphoglycerate kinase (Acinetobacter baylyi (strain ATCC 33305 / BD413 / ADP1)).